We begin with the raw amino-acid sequence, 105 residues long: Class I hydrophobin 1 (105 aa).

Positions 1-18 (MAFIKSLLIASVAAVAFA) are cleaved as a signal peptide. 4 disulfide bridges follow: cysteine 42–cysteine 83, cysteine 50–cysteine 76, cysteine 51–cysteine 62, and cysteine 84–cysteine 100.

Belongs to the fungal hydrophobin family. In terms of assembly, self-assembles to form functional amyloid fibrils called rodlets. Self-assembly into fibrillar rodlets occurs spontaneously at hydrophobic:hydrophilic interfaces and the rodlets further associate laterally to form amphipathic monolayers.

The protein localises to the secreted. It localises to the cell wall. Functionally, aerial growth, conidiation, and dispersal of filamentous fungi in the environment rely upon a capability of their secreting small amphipathic proteins called hydrophobins (HPBs) with low sequence identity. Class I can self-assemble into an outermost layer of rodlet bundles on aerial cell surfaces, conferring cellular hydrophobicity that supports fungal growth, development and dispersal; whereas Class II form highly ordered films at water-air interfaces through intermolecular interactions but contribute nothing to the rodlet structure. The protein is Class I hydrophobin 1 of Davidiella tassiana (Mycosphaerella tassiana).